A 213-amino-acid chain; its full sequence is ATP synthase subunit b 2 (213 aa).

A disordered region spans residues 1–45; that stretch reads MFVTEAYAQSAPTVGETHTETPAVGQPQPEATHTETGVAHGAEHG. The chain crosses the membrane as a helical span at residues 57-76; that stretch reads TYASQVLWLAITFGLFYLLM.

It belongs to the ATPase B chain family. In terms of assembly, F-type ATPases have 2 components, F(1) - the catalytic core - and F(0) - the membrane proton channel. F(1) has five subunits: alpha(3), beta(3), gamma(1), delta(1), epsilon(1). F(0) has three main subunits: a(1), b(2) and c(10-14). The alpha and beta chains form an alternating ring which encloses part of the gamma chain. F(1) is attached to F(0) by a central stalk formed by the gamma and epsilon chains, while a peripheral stalk is formed by the delta and b chains.

It localises to the cell inner membrane. In terms of biological role, f(1)F(0) ATP synthase produces ATP from ADP in the presence of a proton or sodium gradient. F-type ATPases consist of two structural domains, F(1) containing the extramembraneous catalytic core and F(0) containing the membrane proton channel, linked together by a central stalk and a peripheral stalk. During catalysis, ATP synthesis in the catalytic domain of F(1) is coupled via a rotary mechanism of the central stalk subunits to proton translocation. Functionally, component of the F(0) channel, it forms part of the peripheral stalk, linking F(1) to F(0). The b'-subunit is a diverged and duplicated form of b found in plants and photosynthetic bacteria. This Agrobacterium fabrum (strain C58 / ATCC 33970) (Agrobacterium tumefaciens (strain C58)) protein is ATP synthase subunit b 2 (atpF2).